We begin with the raw amino-acid sequence, 297 residues long: Probable deoxyhypusine synthase (297 aa).

The Nucleophile role is filled by Lys265.

This sequence belongs to the deoxyhypusine synthase family. Requires NAD(+) as cofactor.

It catalyses the reaction [eIF5A protein]-L-lysine + spermidine = [eIF5A protein]-deoxyhypusine + propane-1,3-diamine. It functions in the pathway protein modification; eIF5A hypusination. Functionally, catalyzes the NAD-dependent oxidative cleavage of spermidine and the subsequent transfer of the butylamine moiety of spermidine to the epsilon-amino group of a specific lysine residue of the eIF-5A precursor protein to form the intermediate deoxyhypusine residue. This is Probable deoxyhypusine synthase from Methanopyrus kandleri (strain AV19 / DSM 6324 / JCM 9639 / NBRC 100938).